The primary structure comprises 556 residues: Formate--tetrahydrofolate ligase (556 aa).

65 to 72 (TPAGEGKT) is an ATP binding site.

It belongs to the formate--tetrahydrofolate ligase family.

The catalysed reaction is (6S)-5,6,7,8-tetrahydrofolate + formate + ATP = (6R)-10-formyltetrahydrofolate + ADP + phosphate. The protein operates within one-carbon metabolism; tetrahydrofolate interconversion. The polypeptide is Formate--tetrahydrofolate ligase (Maricaulis maris (strain MCS10) (Caulobacter maris)).